The following is an 803-amino-acid chain: Bromodomain-containing protein 2 (803 aa).

The residue at position 1 (Met-1) is an N-acetylmethionine. Thr-6 is modified (phosphothreonine). The residue at position 37 (Ser-37) is a Phosphoserine. The segment at 53-73 is disordered; sequence ALQLTPANPPPPEVSNPKKPG. One can recognise a Bromo 1 domain in the interval 74 to 180; the sequence is RVTNQLQYLH…KIFLQKVASM (107 aa). A protein-binding residues include Asp-112, Tyr-155, Asn-156, Lys-157, Asp-160, and Asp-161. Disordered regions lie at residues 268-348, 456-652, and 739-803; these read PPAQ…KLSE, EPLE…KRQL, and EKRL…SDSG. Over residues 285 to 298 the composition is skewed to low complexity; that stretch reads TTTPTPTAILAPGS. Ser-298 and Ser-301 each carry phosphoserine. The segment covering 316–332 has biased composition (basic and acidic residues); sequence VRRESGRPIKPPRKDLP. A Bromo 2 domain is found at 344–453; it reads GKLSEQLKHC…DVFEFRYAKM (110 aa). Positions 481 to 515 are enriched in acidic residues; it reads SSEESSSESSSEEEEEEDEDEEEEEEESESSDSEE. Basic residues predominate over residues 545–567; sequence KPKRKREKKEKKKKRKAEKHRGR. A Nuclear localization signal motif is present at residues 556–560; that stretch reads KKKRK. The segment covering 623–632 has biased composition (low complexity); that stretch reads KTAPPALPAG. One can recognise an NET domain in the interval 634 to 716; that stretch reads DSEEEEESRP…SCLRKKPRKP (83 aa). Residue Ser-635 is modified to Phosphoserine. A compositionally biased stretch (basic and acidic residues) spans 641–652; that stretch reads SRPMSYDEKRQL. Positions 777–797 are enriched in low complexity; sequence SASSSSSDSSSSSSSSSSSDT.

It belongs to the BET family. In terms of assembly, homodimer. Interacts with E2F1. Interacts with (acetylated) STAT3; promoting STAT3 recruitment to chromatin. Interacts with CTCF; promoting BRD2 recruitment to chromatin.

The protein resides in the nucleus. It localises to the chromosome. Chromatin reader protein that specifically recognizes and binds histone H4 acetylated at 'Lys-5' and 'Lys-12' (H4K5ac and H4K12ac, respectively), thereby controlling gene expression and remodeling chromatin structures. Recruits transcription factors and coactivators to target gene sites, and activates RNA polymerase II machinery for transcriptional elongation. Plays a key role in genome compartmentalization via its association with CTCF and cohesin: recruited to chromatin by CTCF and promotes formation of topologically associating domains (TADs) via its ability to bind acetylated histones, contributing to CTCF boundary formation and enhancer insulation. Also recognizes and binds acetylated non-histone proteins, such as STAT3. Involved in inflammatory response by regulating differentiation of naive CD4(+) T-cells into T-helper Th17: recognizes and binds STAT3 acetylated at 'Lys-87', promoting STAT3 recruitment to chromatin. In addition to acetylated lysines, also recognizes and binds lysine residues on histones that are both methylated and acetylated on the same side chain to form N6-acetyl-N6-methyllysine (Kacme), an epigenetic mark of active chromatin associated with increased transcriptional initiation. Specifically binds histone H4 acetyl-methylated at 'Lys-5' and 'Lys-12' (H4K5acme and H4K12acme, respectively). This is Bromodomain-containing protein 2 (BRD2) from Bos taurus (Bovine).